Here is a 504-residue protein sequence, read N- to C-terminus: Endochitinase (504 aa).

An N-terminal signal peptide occupies residues 1–22; sequence MNRTTLILFFIILSNTITVIHG. Residues 23–392 form the GH18 domain; the sequence is YVRGCYYTNW…NAISSELEGE (370 aa). Residues Cys27 and Cys52 are joined by a disulfide bond. Residues 78–79 and 105–108 contribute to the chitin site; these read TE and GGYN. Residue Glu148 is the Proton donor of the active site. Residues Tyr149, 212–215, and Trp362 contribute to the chitin site; that span reads MSYD. The disordered stretch occupies residues 389–450; that stretch reads LEGESENPEI…YDTDETEGQE (62 aa). Low complexity predominate over residues 396 to 408; the sequence is PEITTEEPSITET. A run of 2 repeats spans residues 407 to 420 and 421 to 434. The tract at residues 407–448 is 3 X 14 AA approximate tandem repeats of E-T-E-A-Y-[ED]-T-D-E-T-E-E-T-S; the sequence is ETEAYETDETEETSETEAYDTDETEETSETEATTYDTDETEG. Positions 409-435 are enriched in acidic residues; the sequence is EAYETDETEETSETEAYDTDETEETSE. One copy of the 3; approximate repeat lies at 435 to 448; sequence ETEATTYDTDETEG. Residues 448 to 504 enclose the Chitin-binding type-2 domain; sequence GQECPERDGLFPHPTDCHLFIQCANNIAYVMQCPATTFFNDAIKVCDHMTNAPDTCI. Cysteines 480 and 493 form a disulfide.

It belongs to the glycosyl hydrolase 18 family. Chitinase class II subfamily. Post-translationally, O-glycosylated.

The enzyme catalyses Random endo-hydrolysis of N-acetyl-beta-D-glucosaminide (1-&gt;4)-beta-linkages in chitin and chitodextrins.. In terms of biological role, microfilarial chitinase, which may function to degrade chitin-containing structures in the micro-filaria or in its mosquito vector during parasite development and transmission. The chain is Endochitinase from Brugia malayi (Filarial nematode worm).